We begin with the raw amino-acid sequence, 586 residues long: A-type ATP synthase subunit A (586 aa).

An ATP-binding site is contributed by 232-239 (GPFGSGKT).

The protein belongs to the ATPase alpha/beta chains family. In terms of assembly, has multiple subunits with at least A(3), B(3), C, D, E, F, H, I and proteolipid K(x).

It is found in the cell membrane. It catalyses the reaction ATP + H2O + 4 H(+)(in) = ADP + phosphate + 5 H(+)(out). In terms of biological role, component of the A-type ATP synthase that produces ATP from ADP in the presence of a proton gradient across the membrane. The A chain is the catalytic subunit. This Methanococcus maripaludis (strain C5 / ATCC BAA-1333) protein is A-type ATP synthase subunit A.